Here is a 146-residue protein sequence, read N- to C-terminus: Phosphoribosyl-AMP cyclohydrolase (146 aa).

Asp-95 is a binding site for Mg(2+). Cys-96 is a Zn(2+) binding site. Positions 97 and 99 each coordinate Mg(2+). Residues Cys-112 and Cys-119 each coordinate Zn(2+).

The protein belongs to the PRA-CH family. In terms of assembly, homodimer. Requires Mg(2+) as cofactor. The cofactor is Zn(2+).

It localises to the cytoplasm. It catalyses the reaction 1-(5-phospho-beta-D-ribosyl)-5'-AMP + H2O = 1-(5-phospho-beta-D-ribosyl)-5-[(5-phospho-beta-D-ribosylamino)methylideneamino]imidazole-4-carboxamide. Its pathway is amino-acid biosynthesis; L-histidine biosynthesis; L-histidine from 5-phospho-alpha-D-ribose 1-diphosphate: step 3/9. Functionally, catalyzes the hydrolysis of the adenine ring of phosphoribosyl-AMP. This Chromohalobacter salexigens (strain ATCC BAA-138 / DSM 3043 / CIP 106854 / NCIMB 13768 / 1H11) protein is Phosphoribosyl-AMP cyclohydrolase.